The chain runs to 197 residues: Holliday junction branch migration complex subunit RuvA (197 aa).

A domain I region spans residues 1–63 (MFEYLNGKLV…EDAHSLYGFV (63 aa)). Residues 64–142 (NESEKALFLR…ATGAVGISLL (79 aa)) form a domain II region. The segment at 142-146 (LDAAP) is flexible linker. The domain III stretch occupies residues 147 to 197 (AGNLALEEAIEALQALGYKATELKKIEKKLEQEAGLTSEEYIKSALKLMMK).

This sequence belongs to the RuvA family. In terms of assembly, homotetramer. Forms an RuvA(8)-RuvB(12)-Holliday junction (HJ) complex. HJ DNA is sandwiched between 2 RuvA tetramers; dsDNA enters through RuvA and exits via RuvB. An RuvB hexamer assembles on each DNA strand where it exits the tetramer. Each RuvB hexamer is contacted by two RuvA subunits (via domain III) on 2 adjacent RuvB subunits; this complex drives branch migration. In the full resolvosome a probable DNA-RuvA(4)-RuvB(12)-RuvC(2) complex forms which resolves the HJ.

The protein resides in the cytoplasm. Functionally, the RuvA-RuvB-RuvC complex processes Holliday junction (HJ) DNA during genetic recombination and DNA repair, while the RuvA-RuvB complex plays an important role in the rescue of blocked DNA replication forks via replication fork reversal (RFR). RuvA specifically binds to HJ cruciform DNA, conferring on it an open structure. The RuvB hexamer acts as an ATP-dependent pump, pulling dsDNA into and through the RuvAB complex. HJ branch migration allows RuvC to scan DNA until it finds its consensus sequence, where it cleaves and resolves the cruciform DNA. The chain is Holliday junction branch migration complex subunit RuvA from Lactococcus lactis subsp. cremoris (strain SK11).